The sequence spans 340 residues: Guanine nucleotide-binding protein G(I)/G(S)/G(T) subunit beta-3 (340 aa).

WD repeat units follow at residues 53 to 83 (GHLA…IVWD), 95 to 125 (LRSS…SIYN), 141 to 170 (AHTG…ALWD), 182 to 212 (GHTG…KLWD), 224 to 254 (GHES…RLFD), 268 to 298 (SIIC…NVWD), and 310 to 340 (GHDN…KIWN).

It belongs to the WD repeat G protein beta family. G proteins are composed of 3 units, alpha, beta and gamma. Interacts with RASD2.

Guanine nucleotide-binding proteins (G proteins) are involved as a modulator or transducer in various transmembrane signaling systems. The beta and gamma chains are required for the GTPase activity, for replacement of GDP by GTP, and for G protein-effector interaction. In Homo sapiens (Human), this protein is Guanine nucleotide-binding protein G(I)/G(S)/G(T) subunit beta-3 (GNB3).